Here is a 258-residue protein sequence, read N- to C-terminus: Probable succinate transporter subunit YjjP (258 aa).

The next 5 membrane-spanning stretches (helical) occupy residues 116-137 (YPRWLLVLMVGLSCACFCKLNN), 143-160 (AVVTFFASTVAMYIRQLL), 171-191 (FCITAFVATTISGLMLRLPAF), 197-217 (IAMAASVLLLVPGFPLINAVA), and 231-251 (WAIASLLTLATCIGVVMAMTM).

This sequence belongs to the ThrE exporter (TC 2.A.79) family. The transporter is composed of YjjB and YjjP.

The protein resides in the cell inner membrane. Functionally, involved in succinate export with YjjB. Both proteins are required for export. Participates in succinate export, but also in the export of other dicarboxylates, such as fumarate and malate. Contributes to succinate production under both aerobic and anaerobic conditions, and increases fumarate and malate production during anaerobic succinate production. The polypeptide is Probable succinate transporter subunit YjjP (Klebsiella aerogenes (strain ATCC 13048 / DSM 30053 / CCUG 1429 / JCM 1235 / KCTC 2190 / NBRC 13534 / NCIMB 10102 / NCTC 10006 / CDC 819-56) (Enterobacter aerogenes)).